The primary structure comprises 193 residues: MPNWGGGKKCGVCQKTVYFAEEVQCEGNSFHKSCFLCMVCKKNLDSTTVAVHGEEIYCKSCYGKKYGPKGYGYGQGAGTLSTDKGESLGIKHEEAPGHRPTTNPNASKFAQKIGGSERCPRCSQAVYAAEKVIGAGKSWHKSCFRCAKCGKGLESTTLADKDGEIYCKGCYAKNFGPKGFGFGQGAGALVHSE.

The region spanning 10–61 is the LIM zinc-binding 1 domain; that stretch reads CGVCQKTVYFAEEVQCEGNSFHKSCFLCMVCKKNLDSTTVAVHGEEIYCKSC. The Nuclear localization signal signature appears at 64–69; sequence KKYGPK. Serine 81 is subject to Phosphoserine. An N6-acetyllysine modification is found at lysine 84. Lysine 91 is covalently cross-linked (Glycyl lysine isopeptide (Lys-Gly) (interchain with G-Cter in SUMO2)). An N6-acetyllysine mark is found at lysine 112, lysine 131, lysine 137, and lysine 161. The LIM zinc-binding 2 domain maps to 119-170; the sequence is CPRCSQAVYAAEKVIGAGKSWHKSCFRCAKCGKGLESTTLADKDGEIYCKGC. Residue serine 192 is modified to Phosphoserine.

Interacts with ASCC1; ASCC2 and TRIP4.

It is found in the nucleus. Its function is as follows. Could play a role in neuronal development. This is Cysteine and glycine-rich protein 1 (Csrp1) from Mus musculus (Mouse).